A 236-amino-acid chain; its full sequence is Large ribosomal subunit protein uL1 (236 aa).

The protein belongs to the universal ribosomal protein uL1 family. In terms of assembly, part of the 50S ribosomal subunit.

In terms of biological role, binds directly to 23S rRNA. The L1 stalk is quite mobile in the ribosome, and is involved in E site tRNA release. Functionally, protein L1 is also a translational repressor protein, it controls the translation of the L11 operon by binding to its mRNA. The chain is Large ribosomal subunit protein uL1 from Acidobacterium capsulatum (strain ATCC 51196 / DSM 11244 / BCRC 80197 / JCM 7670 / NBRC 15755 / NCIMB 13165 / 161).